The primary structure comprises 122 residues: uncharacterized protein (122 aa).

It belongs to the phage O protein family.

This is an uncharacterized protein from Escherichia coli O6:H1 (strain CFT073 / ATCC 700928 / UPEC).